The primary structure comprises 158 residues: UPF0262 protein Rsph17025_0594 (158 aa).

The protein belongs to the UPF0262 family.

This is UPF0262 protein Rsph17025_0594 from Cereibacter sphaeroides (strain ATCC 17025 / ATH 2.4.3) (Rhodobacter sphaeroides).